A 119-amino-acid chain; its full sequence is Flagellar transcriptional regulator FlhD (119 aa).

This sequence belongs to the FlhD family. As to quaternary structure, homodimer; disulfide-linked. Forms a heterohexamer composed of two FlhC and four FlhD subunits. Each FlhC binds a FlhD dimer, forming a heterotrimer, and a hexamer assembles by dimerization of two heterotrimers.

The protein localises to the cytoplasm. In terms of biological role, functions in complex with FlhC as a master transcriptional regulator that regulates transcription of several flagellar and non-flagellar operons by binding to their promoter region. Activates expression of class 2 flagellar genes, including fliA, which is a flagellum-specific sigma factor that turns on the class 3 genes. Also regulates genes whose products function in a variety of physiological pathways. The chain is Flagellar transcriptional regulator FlhD from Shigella dysenteriae serotype 1 (strain Sd197).